A 293-amino-acid polypeptide reads, in one-letter code: Nucleotide-binding protein Csac_1160 (293 aa).

An ATP-binding site is contributed by 11-18; the sequence is GMSGAGKS. GTP is bound at residue 62-65; that stretch reads DIRG.

The protein belongs to the RapZ-like family.

Displays ATPase and GTPase activities. The polypeptide is Nucleotide-binding protein Csac_1160 (Caldicellulosiruptor saccharolyticus (strain ATCC 43494 / DSM 8903 / Tp8T 6331)).